Here is a 230-residue protein sequence, read N- to C-terminus: Dephospho-CoA kinase (230 aa).

Residues 1 to 21 (MSKYAAAPSPYSHQPQTPEHK) are disordered. The region spanning 26-225 (VVGLTGGIGS…QDYLKLAQQL (200 aa)) is the DPCK domain. An ATP-binding site is contributed by 34–39 (GSGKSA).

This sequence belongs to the CoaE family.

The protein resides in the cytoplasm. The enzyme catalyses 3'-dephospho-CoA + ATP = ADP + CoA + H(+). Its pathway is cofactor biosynthesis; coenzyme A biosynthesis; CoA from (R)-pantothenate: step 5/5. Functionally, catalyzes the phosphorylation of the 3'-hydroxyl group of dephosphocoenzyme A to form coenzyme A. This chain is Dephospho-CoA kinase, found in Psychrobacter cryohalolentis (strain ATCC BAA-1226 / DSM 17306 / VKM B-2378 / K5).